Reading from the N-terminus, the 358-residue chain is Peptide chain release factor 1 (358 aa).

The residue at position 233 (Q233) is an N5-methylglutamine.

This sequence belongs to the prokaryotic/mitochondrial release factor family. Methylated by PrmC. Methylation increases the termination efficiency of RF1.

The protein localises to the cytoplasm. Peptide chain release factor 1 directs the termination of translation in response to the peptide chain termination codons UAG and UAA. This Staphylococcus saprophyticus subsp. saprophyticus (strain ATCC 15305 / DSM 20229 / NCIMB 8711 / NCTC 7292 / S-41) protein is Peptide chain release factor 1.